A 225-amino-acid chain; its full sequence is uncharacterized protein (225 aa).

The PCI domain occupies 166 to 214 (LNSDVIKDKILAIIENVGEITYEELAEKINIPEEDLEKYLSELKESGDI).

This is an uncharacterized protein from Methanocaldococcus jannaschii (strain ATCC 43067 / DSM 2661 / JAL-1 / JCM 10045 / NBRC 100440) (Methanococcus jannaschii).